A 567-amino-acid chain; its full sequence is Pyruvate decarboxylase (567 aa).

2 residues coordinate pyruvate: Asp28 and His117. Thiamine diphosphate contacts are provided by residues Thr393 and 416 to 418 (GSI). Asp447 contacts Mg(2+). Residues 448–449 (GS) and 475–480 (NDGYTI) contribute to the thiamine diphosphate site. Mg(2+) contacts are provided by Asn475 and Gly477. Glu481 is a binding site for pyruvate.

The protein belongs to the TPP enzyme family. As to quaternary structure, homotetramer. Mg(2+) is required as a cofactor. The cofactor is thiamine diphosphate.

It localises to the cytoplasm. It carries out the reaction a 2-oxocarboxylate + H(+) = an aldehyde + CO2. The catalysed reaction is pyruvate + H(+) = acetaldehyde + CO2. This is Pyruvate decarboxylase (PDC11) from Candida albicans (strain SC5314 / ATCC MYA-2876) (Yeast).